The primary structure comprises 255 residues: 1-(5-phosphoribosyl)-5-[(5-phosphoribosylamino)methylideneamino] imidazole-4-carboxamide isomerase (255 aa).

D8 (proton acceptor) is an active-site residue. Residue D129 is the Proton donor of the active site.

Belongs to the HisA/HisF family.

It is found in the cytoplasm. It carries out the reaction 1-(5-phospho-beta-D-ribosyl)-5-[(5-phospho-beta-D-ribosylamino)methylideneamino]imidazole-4-carboxamide = 5-[(5-phospho-1-deoxy-D-ribulos-1-ylimino)methylamino]-1-(5-phospho-beta-D-ribosyl)imidazole-4-carboxamide. It participates in amino-acid biosynthesis; L-histidine biosynthesis; L-histidine from 5-phospho-alpha-D-ribose 1-diphosphate: step 4/9. This Synechococcus sp. (strain CC9902) protein is 1-(5-phosphoribosyl)-5-[(5-phosphoribosylamino)methylideneamino] imidazole-4-carboxamide isomerase.